Reading from the N-terminus, the 286-residue chain is tRNA (guanine-N(7)-)-methyltransferase (286 aa).

A phosphoserine mark is found at Ser-7 and Ser-59. Residues Gly-103, 126 to 127 (EI), 161 to 162 (NA), and Cys-181 each bind S-adenosyl-L-methionine. Asp-184 is a catalytic residue. 259–261 (TEE) serves as a coordination point for S-adenosyl-L-methionine.

The protein belongs to the class I-like SAM-binding methyltransferase superfamily. TrmB family. Forms a complex with TRM82.

The protein resides in the nucleus. It carries out the reaction guanosine(46) in tRNA + S-adenosyl-L-methionine = N(7)-methylguanosine(46) in tRNA + S-adenosyl-L-homocysteine. It participates in tRNA modification; N(7)-methylguanine-tRNA biosynthesis. In terms of biological role, methyltransferase that catalyzes the formation of N(7)-methylguanine at position 46 (m7G46) in tRNA, a modification required to maintain stability of tRNAs; its absence resulting in tRNA decay. Both the D-stem and T-stem structures of tRNAs are required for efficient methyltransferase activity. The sequence is that of tRNA (guanine-N(7)-)-methyltransferase from Saccharomyces cerevisiae (strain YJM789) (Baker's yeast).